We begin with the raw amino-acid sequence, 208 residues long: Large ribosomal subunit protein uL3c (208 aa).

The interval 129–165 (TRGPMTHGSKNHREPGSIGQGSTPGKVHKGKKMAGRL) is disordered.

This sequence belongs to the universal ribosomal protein uL3 family. Part of the 50S ribosomal subunit.

It localises to the plastid. The protein resides in the chloroplast. One of the primary rRNA binding proteins, it binds directly near the 3'-end of the 23S rRNA, where it nucleates assembly of the 50S subunit. This is Large ribosomal subunit protein uL3c (rpl3) from Rhodomonas salina (Cryptomonas salina).